Reading from the N-terminus, the 487-residue chain is Sodium-coupled neutral amino acid symporter 1 (487 aa).

Residues 1–74 (MMHFKSGLEL…EYIPGTTSLG (74 aa)) lie on the Cytoplasmic side of the membrane. A Phosphoserine modification is found at Ser6. Thr11 bears the Phosphothreonine mark. A phosphoserine mark is found at Ser25, Ser28, Ser49, and Ser52. Thr54 is subject to Phosphothreonine. Position 56 is a phosphoserine (Ser56). Residues 75-97 (MSVFNLSNAIMGSGILGLAFALA) traverse the membrane as a helical segment. The Extracellular portion of the chain corresponds to 98 to 112 (NTGILLFLVLLTSVT). The helical transmembrane segment at 113–133 (LLSIYSINLLLICSKETGCMV) threads the bilayer. Over 134-147 (YEKLGEQVFGTTGK) the chain is Cytoplasmic. Residues 148–168 (FVIFGATSLQNTGAMLSYLFI) form a helical membrane-spanning segment. Over 169–188 (VKNELPSAIKFLMGKEETFS) the chain is Extracellular. A helical transmembrane segment spans residues 189–211 (AWYVDGRVLVVIVTFGIILPLCL). Residues 212–216 (LKNLG) lie on the Cytoplasmic side of the membrane. The chain crosses the membrane as a helical span at residues 217–237 (YLGYTSGFSLSCMVFFLIVVI). Residues 238 to 275 (YKKFQIPCIVPELNSTISANSTNADTCTPKYVTLNSKT) are Extracellular-facing. Cys245 and Cys264 are joined by a disulfide. N-linked (GlcNAc...) asparagine glycans are attached at residues Asn251 and Asn257. Residues 276–296 (VYALPTIAFAFVCHPSVLPIY) form a helical membrane-spanning segment. The Cytoplasmic segment spans residues 297-312 (SELKDRSQKKMQMVSN). Residues 313-333 (ISFFAMFVMYFLTAIFGYLTF) form a helical membrane-spanning segment. The Extracellular segment spans residues 334–350 (YDNVQSDLLHKYQGKDD). The chain crosses the membrane as a helical span at residues 351–371 (ILILTVRLAVIVAVILTVPVL). The Cytoplasmic portion of the chain corresponds to 372–393 (FFTVRSSLFELAKKTKFNLCRH). Residues 394–414 (TVVTCILLVVINLLVISIPSM) traverse the membrane as a helical segment. Residues 415–416 (KD) are Extracellular-facing. The chain crosses the membrane as a helical span at residues 417 to 437 (IFGVVGVTSANMLIFILPSSL). Topologically, residues 438 to 452 (YLKITDQDGDKGTQR) are cytoplasmic. A helical membrane pass occupies residues 453 to 473 (IWAALFLGLGVLFSLVSIPLV). Topologically, residues 474–487 (IYDWACSSSSDEGH) are extracellular.

Belongs to the amino acid/polyamine transporter 2 family. Post-translationally, N-glycosylation plays an important role in the L-glutamine transport.

It is found in the cell membrane. The catalysed reaction is L-glutamine(in) + Na(+)(in) = L-glutamine(out) + Na(+)(out). The enzyme catalyses L-alanine(in) + Na(+)(in) = L-alanine(out) + Na(+)(out). It carries out the reaction L-asparagine(in) + Na(+)(in) = L-asparagine(out) + Na(+)(out). It catalyses the reaction L-histidine(in) + Na(+)(in) = L-histidine(out) + Na(+)(out). The catalysed reaction is L-serine(in) + Na(+)(in) = L-serine(out) + Na(+)(out). The enzyme catalyses L-cysteine(in) + Na(+)(in) = L-cysteine(out) + Na(+)(out). It carries out the reaction L-methionine(in) + Na(+)(in) = L-methionine(out) + Na(+)(out). It catalyses the reaction glycine(in) + Na(+)(in) = glycine(out) + Na(+)(out). The catalysed reaction is L-threonine(in) + Na(+)(in) = L-threonine(out) + Na(+)(out). The enzyme catalyses L-proline(in) + Na(+)(in) = L-proline(out) + Na(+)(out). With respect to regulation, inhibited by alpha-(methylamino)isobutyric acid (MeAIB). Inhibited by lithium, potassium, choline ions, N-methylglucamine. The pH dependence has an allosteric effect on the transport. Functionally, symporter that cotransports short-chain neutral amino acids and sodium ions from the extraccellular to the intracellular side of the cell membrane. The transport is elctrogenic, pH dependent and driven by the Na(+) electrochemical gradient. Participates in the astroglia-derived glutamine transport into GABAergic interneurons for neurotransmitter GABA de novo synthesis. May also contributes to amino acid transport in placental trophoblast. Regulates synaptic plasticity. The chain is Sodium-coupled neutral amino acid symporter 1 from Pongo abelii (Sumatran orangutan).